A 453-amino-acid chain; its full sequence is MSQSPKVGFVSLGCPKALVDSEQIITQLRAEGYEISGSYDGADLVVVNTCGFIDEAVQESLDAIGEALTENGKVIVTGCLGAKSSASGSNLIEEVHPKVLAVTGPHAVGEVMQAVHSHLPKPHDPFVDLVPAAGIKLTPRHYAYLKISEGCNHRCTFCIIPSMRGDLVSRPVAEVMLEAENLFKSGVKELLVISQDTSAYGVDVKYRTGFWNGKPIKTRMTDLVAALGELAAQYGAWVRLHYVYPYPSVDEVIPLMAEGAFKGHVLPYLDVPFQHAHPEVLKRMKRPANAEKVLERVQKWREICPDLTIRSTFIAGFPGETEEQFETLLDFIREAELDRVGCFAYSPVEGATANDLDGALPDEVREERRARFMEVAEEVSANRMQRKVGKTLKVLIDEVSAEGGIGRTAADAPEIDGVVYVEPAAKASKRYKVGDFVSVKITGADGHDLWGEV.

In terms of domain architecture, MTTase N-terminal spans 5-120 (PKVGFVSLGC…VMQAVHSHLP (116 aa)). The [4Fe-4S] cluster site is built by cysteine 14, cysteine 50, cysteine 79, cysteine 151, cysteine 155, and cysteine 158. The Radical SAM core domain maps to 137–382 (LTPRHYAYLK…MEVAEEVSAN (246 aa)). In terms of domain architecture, TRAM spans 385–453 (QRKVGKTLKV…ADGHDLWGEV (69 aa)).

The protein belongs to the methylthiotransferase family. RimO subfamily. It depends on [4Fe-4S] cluster as a cofactor.

The protein localises to the cytoplasm. The catalysed reaction is L-aspartate(89)-[ribosomal protein uS12]-hydrogen + (sulfur carrier)-SH + AH2 + 2 S-adenosyl-L-methionine = 3-methylsulfanyl-L-aspartate(89)-[ribosomal protein uS12]-hydrogen + (sulfur carrier)-H + 5'-deoxyadenosine + L-methionine + A + S-adenosyl-L-homocysteine + 2 H(+). Its function is as follows. Catalyzes the methylthiolation of an aspartic acid residue of ribosomal protein uS12. The polypeptide is Ribosomal protein uS12 methylthiotransferase RimO (Burkholderia cenocepacia (strain HI2424)).